The primary structure comprises 134 residues: Small ribosomal subunit protein uS11 (134 aa).

A disordered region spans residues 115 to 134 (VTPIPTDSTRRKGGRRGRRL). The span at 125-134 (RKGGRRGRRL) shows a compositional bias: basic residues.

Belongs to the universal ribosomal protein uS11 family.

This Syntrichia ruralis (Great hairy screw-moss) protein is Small ribosomal subunit protein uS11 (RPS14).